Here is a 95-residue protein sequence, read N- to C-terminus: Small ribosomal subunit protein bS18 (95 aa).

Belongs to the bacterial ribosomal protein bS18 family. In terms of assembly, part of the 30S ribosomal subunit. Forms a tight heterodimer with protein bS6.

In terms of biological role, binds as a heterodimer with protein bS6 to the central domain of the 16S rRNA, where it helps stabilize the platform of the 30S subunit. In Rickettsia typhi (strain ATCC VR-144 / Wilmington), this protein is Small ribosomal subunit protein bS18.